Reading from the N-terminus, the 131-residue chain is D-ribose pyranase (131 aa).

His-20 (proton donor) is an active-site residue. Residues Asp-28, His-98, and Tyr-120 to Asn-122 each bind substrate.

The protein belongs to the RbsD / FucU family. RbsD subfamily. As to quaternary structure, homodecamer.

Its subcellular location is the cytoplasm. The catalysed reaction is beta-D-ribopyranose = beta-D-ribofuranose. It functions in the pathway carbohydrate metabolism; D-ribose degradation; D-ribose 5-phosphate from beta-D-ribopyranose: step 1/2. In terms of biological role, catalyzes the interconversion of beta-pyran and beta-furan forms of D-ribose. The chain is D-ribose pyranase from Bacillus cereus (strain AH187).